The sequence spans 1391 residues: Nuclear pore complex protein Nup155 (1391 aa).

The O-linked (GlcNAc) serine glycan is linked to serine 526. 2 disordered regions span residues serine 604–proline 630 and glutamine 985–serine 1012. Serine 1057 is subject to Phosphoserine.

This sequence belongs to the non-repetitive/WGA-negative nucleoporin family. Interacts with GLE1 and NUP35/NUP53. Able to form a heterotrimer with GLE1 and NUP42 in vitro. Forms a complex with NUP35, NUP93, NUP205 and lamin B. Post-translationally, phosphorylated. Phosphorylation and dephosphorylation may be important for the function of NUP155 and may play a role in the reversible disassembly of the nuclear pore complex during mitosis. In terms of processing, disulfide-linked to NUP62. The inner channel of the NPC has a different redox environment from the cytoplasm and allows the formation of interchain disulfide bonds between some nucleoporins, the significant increase of these linkages upon oxidative stress reduces the permeability of the NPC.

The protein localises to the nucleus. It localises to the nuclear pore complex. The protein resides in the nucleus membrane. In terms of biological role, essential component of nuclear pore complex. Could be essessential for embryogenesis. Nucleoporins may be involved both in binding and translocating proteins during nucleocytoplasmic transport. In Mus musculus (Mouse), this protein is Nuclear pore complex protein Nup155 (Nup155).